A 261-amino-acid chain; its full sequence is Epidermal growth factor-binding protein type B (261 aa).

An N-terminal signal peptide occupies residues 1 to 16 (MWFLILFLALSLGGID). A propeptide spans 17–24 (AAPPLQSR) (activation peptide). One can recognise a Peptidase S1 domain in the interval 25-258 (VVGGFNCKKN…FNSWIKDTMM (234 aa)). 5 disulfides stabilise this stretch: Cys-31–Cys-173, Cys-50–Cys-66, Cys-152–Cys-219, Cys-184–Cys-198, and Cys-209–Cys-234. Residue His-65 is the Charge relay system of the active site. N-linked (GlcNAc...) asparagine glycosylation occurs at Asn-102. Asp-120 (charge relay system) is an active-site residue. Ser-213 serves as the catalytic Charge relay system.

This sequence belongs to the peptidase S1 family. Kallikrein subfamily.

The catalysed reaction is Hydrolyzes mouse Ren2 protein (a species of prorenin present in the submandibular gland) on the carboxy side of the arginine residue at the Lys-Arg-|- pair in the N-terminus, to yield mature renin.. Its function is as follows. Cleaves REN2 at a dibasic site to yield mature renin. This Mus musculus (Mouse) protein is Epidermal growth factor-binding protein type B (Egfbp2).